The sequence spans 104 residues: Fusaric acid biosynthesis protein 2 (104 aa).

This sequence belongs to the YciI family.

It functions in the pathway mycotoxin biosynthesis. Part of the gene cluster that mediates the biosynthesis of fusaric acid, a mycotoxin with low to moderate toxicity to animals and humans, but with high phytotoxic properties. L-aspartate is suggested as fusaric acid amino acid precursor that is activated and further processed to O-acetyl-L-homoserine by cluster enzymes aspartate kinase FUB3 and homoserine O-acetyltransferase FUB5, as well as enzymes of the primary metabolism. The polyketide synthase (PKS) FUB1 generates the triketide trans-2-hexenal which is presumptively released by the hydrolase FUB4 and linked to the NRPS-bound amino acid precursor by NAD(P)-dependent dehydrogenase FUB6. FUB1, FUB4, and the non-canonical NRPS Fub8 may form an enzyme complex. Further processing of the NRPS-bound intermediate might be carried out by FUB6 and the sulfhydrylase FUB7, enabling a spontaneous electrocyclization to close the carbon backbone of fusaric acid. Dihydrofusaric acid is likely to be released via reduction by the thioester reductase (TR) domain of FUB8 whereupon the final oxidation to fusaric acid may (also) be performed by the FMN-dependent dehydrogenase FUB9. This is Fusaric acid biosynthesis protein 2 from Gibberella moniliformis (strain M3125 / FGSC 7600) (Maize ear and stalk rot fungus).